The sequence spans 330 residues: Carbonic anhydrase (330 aa).

The segment at 1–109 is chloroplast transit peptide-like; that stretch reads MSAASAFAMN…AATRIDQITA (109 aa).

This sequence belongs to the beta-class carbonic anhydrase family.

Its subcellular location is the cytoplasm. It catalyses the reaction hydrogencarbonate + H(+) = CO2 + H2O. Its function is as follows. Reversible hydration of carbon dioxide. This chain is Carbonic anhydrase, found in Flaveria bidentis (Coastal plain yellowtops).